Reading from the N-terminus, the 209-residue chain is Thymidylate kinase (209 aa).

13–20 is an ATP binding site; the sequence is GLEGAGKS.

The protein belongs to the thymidylate kinase family.

It carries out the reaction dTMP + ATP = dTDP + ADP. Its function is as follows. Phosphorylation of dTMP to form dTDP in both de novo and salvage pathways of dTTP synthesis. This Shewanella sp. (strain ANA-3) protein is Thymidylate kinase.